The sequence spans 260 residues: Cell division protein DivIB (260 aa).

Topologically, residues 1 to 25 (MGAQDQNGKNHGGLFRDFQNRNVKK) are cytoplasmic. A helical membrane pass occupies residues 26-46 (MWPLVMPITIILLVMIFMISS). At 47–260 (YSRVKKVTVS…STKTTSVQGY (214 aa)) the chain is on the extracellular side. A POTRA domain is found at 48–119 (SRVKKVTVSG…NQVKIKVEEY (72 aa)).

The protein belongs to the FtsQ/DivIB family. DivIB subfamily.

The protein resides in the cell membrane. Its function is as follows. Cell division protein that may be involved in stabilizing or promoting the assembly of the division complex. The protein is Cell division protein DivIB of Lentilactobacillus buchneri (strain NRRL B-30929) (Lactobacillus buchneri).